The following is a 429-amino-acid chain: Adenylosuccinate synthetase (429 aa).

Residues 13–19 (GDEGKGK) and 41–43 (GHT) contribute to the GTP site. The active-site Proton acceptor is D14. D14 and G41 together coordinate Mg(2+). Residues 14–17 (DEGK), 39–42 (NAGH), T130, R144, Q224, T239, and R303 each bind IMP. H42 serves as the catalytic Proton donor. Residue 299 to 305 (ATTGRAR) coordinates substrate. GTP contacts are provided by residues R305, 331–333 (KLD), and 412–414 (STG).

This sequence belongs to the adenylosuccinate synthetase family. In terms of assembly, homodimer. It depends on Mg(2+) as a cofactor.

The protein localises to the cytoplasm. It carries out the reaction IMP + L-aspartate + GTP = N(6)-(1,2-dicarboxyethyl)-AMP + GDP + phosphate + 2 H(+). Its pathway is purine metabolism; AMP biosynthesis via de novo pathway; AMP from IMP: step 1/2. Its function is as follows. Plays an important role in the de novo pathway of purine nucleotide biosynthesis. Catalyzes the first committed step in the biosynthesis of AMP from IMP. This is Adenylosuccinate synthetase from Psychrobacter sp. (strain PRwf-1).